A 242-amino-acid chain; its full sequence is ATP-dependent dethiobiotin synthetase BioD (242 aa).

12–17 serves as a coordination point for ATP; that stretch reads EVGKTV. Position 16 (T16) interacts with Mg(2+). K37 is a catalytic residue. S41 provides a ligand contact to substrate. ATP is bound by residues D51 and 112-115; that span reads EGAG. Residues D51 and E112 each coordinate Mg(2+).

This sequence belongs to the dethiobiotin synthetase family. In terms of assembly, homodimer. Requires Mg(2+) as cofactor.

The protein localises to the cytoplasm. It catalyses the reaction (7R,8S)-7,8-diammoniononanoate + CO2 + ATP = (4R,5S)-dethiobiotin + ADP + phosphate + 3 H(+). Its pathway is cofactor biosynthesis; biotin biosynthesis; biotin from 7,8-diaminononanoate: step 1/2. Its function is as follows. Catalyzes a mechanistically unusual reaction, the ATP-dependent insertion of CO2 between the N7 and N8 nitrogen atoms of 7,8-diaminopelargonic acid (DAPA, also called 7,8-diammoniononanoate) to form a ureido ring. The sequence is that of ATP-dependent dethiobiotin synthetase BioD from Bacillus thuringiensis (strain Al Hakam).